We begin with the raw amino-acid sequence, 168 residues long: Pollen allergen Cro s 1 (168 aa).

The first 26 residues, Met1–Ala26, serve as a signal peptide directing secretion. Intrachain disulfides connect Cys38–Cys109, Cys41–Cys153, and Cys62–Cys97. Residue Asn64 is glycosylated (N-linked (GlcNAc...) asparagine).

This sequence belongs to the Ole e I family. As to expression, expressed in pollen.

It localises to the secreted. In Crocus sativus (Saffron), this protein is Pollen allergen Cro s 1.